Reading from the N-terminus, the 236-residue chain is Leucyl/phenylalanyl-tRNA--protein transferase (236 aa).

It belongs to the L/F-transferase family.

It is found in the cytoplasm. The enzyme catalyses N-terminal L-lysyl-[protein] + L-leucyl-tRNA(Leu) = N-terminal L-leucyl-L-lysyl-[protein] + tRNA(Leu) + H(+). The catalysed reaction is N-terminal L-arginyl-[protein] + L-leucyl-tRNA(Leu) = N-terminal L-leucyl-L-arginyl-[protein] + tRNA(Leu) + H(+). It catalyses the reaction L-phenylalanyl-tRNA(Phe) + an N-terminal L-alpha-aminoacyl-[protein] = an N-terminal L-phenylalanyl-L-alpha-aminoacyl-[protein] + tRNA(Phe). In terms of biological role, functions in the N-end rule pathway of protein degradation where it conjugates Leu, Phe and, less efficiently, Met from aminoacyl-tRNAs to the N-termini of proteins containing an N-terminal arginine or lysine. The sequence is that of Leucyl/phenylalanyl-tRNA--protein transferase from Shewanella sediminis (strain HAW-EB3).